The sequence spans 527 residues: Peptide chain release factor 3 (527 aa).

Residues 9 to 277 (AKRRTFAIIS…AVVDWAPRPL (269 aa)) form the tr-type G domain. Residues 18–25 (SHPDAGKT), 86–90 (DTPGH), and 140–143 (NKLD) each bind GTP.

It belongs to the TRAFAC class translation factor GTPase superfamily. Classic translation factor GTPase family. PrfC subfamily.

The protein resides in the cytoplasm. Its function is as follows. Increases the formation of ribosomal termination complexes and stimulates activities of RF-1 and RF-2. It binds guanine nucleotides and has strong preference for UGA stop codons. It may interact directly with the ribosome. The stimulation of RF-1 and RF-2 is significantly reduced by GTP and GDP, but not by GMP. The polypeptide is Peptide chain release factor 3 (Pseudomonas fluorescens (strain SBW25)).